A 166-amino-acid polypeptide reads, in one-letter code: Probable histone deacetylase complex subunit SAP18 (166 aa).

The segment at 143-166 (GRRFNNREQGDRFDHRQRQRSPIR) is disordered. Basic and acidic residues predominate over residues 147–158 (NNREQGDRFDHR).

It belongs to the SAP18 family. In terms of assembly, interacts with SIN3 and histone deacetylase.

Functionally, acts in transcription repression. Involved in the tethering of the SIN3 complex to core histone proteins. The polypeptide is Probable histone deacetylase complex subunit SAP18 (Caenorhabditis elegans).